Here is a 2410-residue protein sequence, read N- to C-terminus: Cell wall alpha-1,3-glucan synthase ags1 (2410 aa).

Residues Ser-1643, Ser-1644, and Ser-1651 each carry the phosphoserine modification. Thr-1653 carries the post-translational modification Phosphothreonine. Positions 1685 to 1706 are disordered; it reads SLSLGSRRGPGHTTEDDASDGL. Residues Ser-1738 and Ser-1812 each carry the phosphoserine modification. A disordered region spans residues 1796 to 1827; it reads QDDLSDPARSVDSDSVSPPLPPFVAGSNPNAR. Low complexity predominate over residues 1802–1827; it reads PARSVDSDSVSPPLPPFVAGSNPNAR.

The protein belongs to the glycosyltransferase group 1 family. In terms of assembly, interacts with sad1.

The enzyme catalyses [(1-&gt;3)-alpha-D-glucosyl](n) + UDP-alpha-D-glucose = [(1-&gt;3)-alpha-D-glucosyl](n+1) + UDP + H(+). In terms of biological role, required for alpha-1,3-glucan and alpha-1,4-glucan production which are required for cell wall synthesis. This is Cell wall alpha-1,3-glucan synthase ags1 (ags1) from Schizosaccharomyces pombe (strain 972 / ATCC 24843) (Fission yeast).